A 355-amino-acid chain; its full sequence is N6-mAMP deaminase (355 aa).

Residues H13 and H15 each coordinate Zn(2+). Residues H15, N17, H65, 97–100 (TTPK), D160, and G190 contribute to the N(6)-methyl-AMP site. Position 217 (H217) interacts with Zn(2+). Residues E220, D295, and D296 each coordinate N(6)-methyl-AMP. Residue E220 is the Proton donor of the active site. D295 lines the Zn(2+) pocket.

Belongs to the metallo-dependent hydrolases superfamily. Adenosine and AMP deaminases family. In terms of assembly, monomer. It depends on Zn(2+) as a cofactor.

It is found in the cytoplasm. It localises to the cytosol. It catalyses the reaction N(6)-methyl-AMP + H2O + H(+) = IMP + methylamine. Catalyzes the hydrolysis of the free cytosolic methylated adenosine nucleotide N(6)-methyl-AMP (N6-mAMP) to produce inositol monophosphate (IMP) and methylamine. Is required for the catabolism of cytosolic N6-mAMP, which is derived from the degradation of mRNA containing N6-methylated adenine (m6A). Does not possess deaminase activity toward adenosine, AMP, N6-methyladenosine, or N6-mATP in vitro. The chain is N6-mAMP deaminase from Arabidopsis thaliana (Mouse-ear cress).